A 116-amino-acid chain; its full sequence is MPRSVNHVASKARRKKILKLTRGYFGARKNVWTVAKNTWEKGLTYAFRDRRNKKRNFRALWIQRINAAARLEGMSYSKLMGGLHKAGIEINRKVLADLAMNHPEAFKAVVAKAKAA.

Belongs to the bacterial ribosomal protein bL20 family.

Functionally, binds directly to 23S ribosomal RNA and is necessary for the in vitro assembly process of the 50S ribosomal subunit. It is not involved in the protein synthesizing functions of that subunit. This Bacteroides thetaiotaomicron (strain ATCC 29148 / DSM 2079 / JCM 5827 / CCUG 10774 / NCTC 10582 / VPI-5482 / E50) protein is Large ribosomal subunit protein bL20.